The chain runs to 643 residues: E3 ubiquitin-protein ligase AMFR (643 aa).

The next 6 membrane-spanning stretches (helical) occupy residues 82 to 102 (LFVWVLVNTACCVLMLVAKLI), 122 to 142 (FWNFIFYKFIFIFGVLNVQTV), 186 to 206 (VLSLLIAMLLSCCGLAVVCCV), 215 to 235 (TLAFMAAESLLVTVRTAHVIL), 254 to 274 (GTYVYYTDFVMELALLSLDLM), and 276 to 296 (HIHMLLFGNIWLSMASLVIFM). The RING-type zinc-finger motif lies at 341–379 (CAICWDSMQAARKLPCGHLFHNSCLRSWLEQDTSCPTCR). Residues 429–449 (IASWLPSFSVEVMHTTNILGI) traverse the membrane as a helical segment. A CUE domain is found at 456 to 498 (QLNAMAHQIQEMFPQVPYHLVLQDLQMTRSVEITTDNILEGRI). Positions 504 to 535 (TQRSDSLRPALNSPVERPSPDLEEGEASVQTE) are disordered. A phosphoserine mark is found at Ser516 and Ser542. Residues 598-624 (LNKSSEDDGASERLLPSEGTSSDPVTL) form a disordered region. The VCP/p97-interacting motif (VIM) stretch occupies residues 622–640 (VTLRRRMLAAAAERRLQRQ).

As to quaternary structure, interacts with RNF5. Also forms an ERAD complex containing VCP/p97, NGLY1; PSMC1; SAKS1 and RAD23B required for coupling retrotranslocation, ubiquitination and deglycosylation. Interacts with DERL1. Interacts (through a region distinct from the RING finger) with UBE2G2/UBC7. Component of the VCP/p97-AMFR/gp78 complex that enhances VCP/p97 binding to polyubiquitinated proteins for their degradation by the endoplasmic reticulum-associated degradation (ERAD) pathway. Interacts (via the VIM) with VCP/p97. Interacts (via its membrane domain) with INSIG1; the interaction initiates the sterol-mediated ubiquitination and degradation of HMGCR by the ERAD pathway. Interacts with AUP1, UBE2G2 and RNF139/TRC8; interaction with AUP1 facilitates interaction of AMFR with ubiquitin-conjugating enzyme UBE2G2 and ubiquitin ligase RNF139, leading to sterol-induced ubiquitination of HNGCR and its subsequent proteasomal degradation. Interacts with BAG6. Interacts with USP13 (via UBA 2 domain); the interaction is direct. Interacts with LMBR1L, UBAC2 and CTNNB1. Interacts with C18orf32. Post-translationally, palmitoylation of the RING-type zing finger by ZDHHC6 promotes localization to the peripheral endoplasmic reticulum. As to expression, expressed in heart, brain, liver, lung, skeletal muscle, kidney and testis. Not detected in spleen.

Its subcellular location is the endoplasmic reticulum membrane. The catalysed reaction is [E2 ubiquitin-conjugating enzyme]-S-ubiquitinyl-L-cysteine + [acceptor protein]-L-cysteine = [E2 ubiquitin-conjugating enzyme]-L-cysteine + [acceptor protein]-S-ubiquitinyl-L-cysteine.. Its pathway is protein modification; protein ubiquitination. Its function is as follows. E3 ubiquitin-protein ligase that mediates the polyubiquitination of lysine and cysteine residues on target proteins, such as CD3D, CYP3A4, CFTR, INSIG1, SOAT2/ACAT2 and APOB for proteasomal degradation. Component of a VCP/p97-AMFR/gp78 complex that participates in the final step of endoplasmic reticulum-associated degradation (ERAD). The VCP/p97-AMFR/gp78 complex is involved in the sterol-accelerated ERAD degradation of HMGCR through binding to the HMGCR-INSIG1 complex at the ER membrane. In addition, interaction of AMFR with AUP1 facilitates interaction of AMFR with ubiquitin-conjugating enzyme UBE2G2 and ubiquitin ligase RNF139, leading to sterol-induced HMGCR ubiquitination. The ubiquitinated HMGCR is then released from the ER by the complex into the cytosol for subsequent destruction. In addition to ubiquitination on lysine residues, catalyzes ubiquitination on cysteine residues: together with INSIG1, mediates polyubiquitination of SOAT2/ACAT2 at 'Cys-277', leading to its degradation when the lipid levels are low. Catalyzes ubiquitination and subsequent degradation of INSIG1 when cells are depleted of sterols. Mediates polyubiquitination of INSIG2 at 'Cys-215' in some tissues, leading to its degradation. Also regulates ERAD through the ubiquitination of UBL4A a component of the BAG6/BAT3 complex. Also acts as a scaffold protein to assemble a complex that couples ubiquitination, retranslocation and deglycosylation. Mediates tumor invasion and metastasis as a receptor for the GPI/autocrine motility factor. In association with LMBR1L and UBAC2, negatively regulates the canonical Wnt signaling pathway in the lymphocytes by promoting the ubiquitin-mediated degradation of CTNNB1 and Wnt receptors FZD6 and LRP6. Regulates NF-kappa-B and MAPK signaling pathways by mediating 'Lys-27'-linked polyubiquitination of TAB3 and promoting subsequent TAK1/MAP3K7 activation. The chain is E3 ubiquitin-protein ligase AMFR (Amfr) from Mus musculus (Mouse).